The following is a 193-amino-acid chain: ATP-dependent protease subunit HslV (193 aa).

T12 is a catalytic residue. Na(+) is bound by residues A167, C170, and T173.

Belongs to the peptidase T1B family. HslV subfamily. A double ring-shaped homohexamer of HslV is capped on each side by a ring-shaped HslU homohexamer. The assembly of the HslU/HslV complex is dependent on binding of ATP.

The protein localises to the cytoplasm. The enzyme catalyses ATP-dependent cleavage of peptide bonds with broad specificity.. Allosterically activated by HslU binding. In terms of biological role, protease subunit of a proteasome-like degradation complex believed to be a general protein degrading machinery. The chain is ATP-dependent protease subunit HslV from Bartonella henselae (strain ATCC 49882 / DSM 28221 / CCUG 30454 / Houston 1) (Rochalimaea henselae).